Consider the following 103-residue polypeptide: UPF0473 protein LVIS_1220 (103 aa).

This sequence belongs to the UPF0473 family.

The sequence is that of UPF0473 protein LVIS_1220 from Levilactobacillus brevis (strain ATCC 367 / BCRC 12310 / CIP 105137 / JCM 1170 / LMG 11437 / NCIMB 947 / NCTC 947) (Lactobacillus brevis).